A 166-amino-acid chain; its full sequence is UPF0304 protein VS_1049 (166 aa).

Belongs to the UPF0304 family.

In Vibrio atlanticus (strain LGP32) (Vibrio splendidus (strain Mel32)), this protein is UPF0304 protein VS_1049.